A 97-amino-acid polypeptide reads, in one-letter code: Small ribosomal subunit protein bS20 (97 aa).

Belongs to the bacterial ribosomal protein bS20 family.

Binds directly to 16S ribosomal RNA. The chain is Small ribosomal subunit protein bS20 from Methylibium petroleiphilum (strain ATCC BAA-1232 / LMG 22953 / PM1).